Reading from the N-terminus, the 450-residue chain is MDARSPDLTTDAAGWRTDVPTTKSLAEVNASVALPTAGVWWRRLLAFVGPGYLVSVGYMDPGNWATDLAGGSKFGYTLLSVILLSNLMAILLQSLAARLGIVTDRDLAQACRATYSPAVNFLLWLACEAAIIACDLAEVIGTAIALKLLFGIPLIGGALIAALDAFLLLLLMNRGFRFLEAFVIALLAVIAVCFAVQIVAAAPPVAEVLHGFMPKSEIFTNPEMLYIAIGIIGATVMPHNLYLHSSIVQTRAYERNETGRREAIKWATTDSTIALMLALFINAAILVVAAATFHKSGHSDVAEIGQAFELLSPLLGLGIASTLFAIALLASGLNSTVTATLAGQIVMEGFLDLRLPSWARRLLTRGIAIIPVIIVTAIYGERGTADLLVFSQVVLSMQLPFAVIPLVRFVSDRRKMGKFAISPYVAAIAWIVAGVIVVLNLKLLADTLLG.

Helical transmembrane passes span 44-64 (LLAF…PGNW), 77-97 (TLLS…SLAA), 121-141 (FLLW…EVIG), 152-172 (IPLI…LLLM), 181-201 (AFVI…IVAA), 218-238 (IFTN…TVMP), 273-293 (IALM…AATF), 310-330 (LLSP…ALLA), 366-386 (GIAI…GTAD), 387-407 (LLVF…IPLV), and 419-439 (FAIS…IVVL).

This sequence belongs to the NRAMP family.

It localises to the cell inner membrane. Functionally, h(+)-stimulated, divalent metal cation uptake system. The protein is Divalent metal cation transporter MntH of Bradyrhizobium diazoefficiens (strain JCM 10833 / BCRC 13528 / IAM 13628 / NBRC 14792 / USDA 110).